Consider the following 187-residue polypeptide: Ribosome-recycling factor (187 aa).

The protein belongs to the RRF family.

The protein localises to the cytoplasm. Functionally, responsible for the release of ribosomes from messenger RNA at the termination of protein biosynthesis. May increase the efficiency of translation by recycling ribosomes from one round of translation to another. In Rhodopseudomonas palustris (strain HaA2), this protein is Ribosome-recycling factor.